Here is a 554-residue protein sequence, read N- to C-terminus: MSYRDLRECIDLERGTEDVGLAAGRSQREKKRSYKDLLREEEEIAEQVRKSSKKRSKELDLFSGNELHKKKKKHSSDDYHADHSTDSAKKKKKTSLPSPSSSDTAMDLLKAITSPQADTSTTHPSKKPEKILATPISFSSPSQPPHKDYHKKSGEVSGDDSSHRSKKSKPLTLREPDGLRMKLIMSPNEKSEEEAVSPQGGPGHSDSASSKKNSKKLGREEIESRSSHKKHKKQSYTPRSGGTPDSASSTGGELDAGELVIDDSLRDMKKKKKSKKSKKKKDKHKDEKHKKHSKSKREHEVEQSQTQIASPGLPSPPPPPATTPPTSPPSIPLQPQALVTHTEEQSDKKKKKEDPEKPKKKNMSAYQVFSKEYRVSIIAEHPGIDFGELSKKLAEVWKQLPEKDKLVWKQKAQYLQHKQNKAEATTVKRKSSSSESAPKSKGSSSGLVSPNKKSPTSSVASFSTSPAKVPDTEPIDVAAHLQLLGESLSLIGHRLQETEGMVAVSGSLSVLLDSILCALGPLVCLTSHVPQLNACPKQILSNTLDNIAYVMPGL.

Disordered stretches follow at residues 15–368 (GTED…AYQV) and 417–469 (HKQN…PAKV). Positions 75-88 (SSDDYHADHSTDSA) are enriched in basic and acidic residues. Residues 95-105 (SLPSPSSSDTA) are compositionally biased toward low complexity. A compositionally biased stretch (polar residues) spans 113 to 123 (TSPQADTSTTH). Basic and acidic residues-rich tracts occupy residues 145–154 (PHKDYHKKSG) and 217–226 (LGREEIESRS). The span at 236–251 (YTPRSGGTPDSASSTG) shows a compositional bias: polar residues. The segment covering 268-296 (MKKKKKSKKSKKKKDKHKDEKHKKHSKSK) has biased composition (basic residues). Pro residues predominate over residues 313–332 (LPSPPPPPATTPPTSPPSIP). The span at 341–357 (HTEEQSDKKKKKEDPEK) shows a compositional bias: basic and acidic residues. A DNA-binding region (HMG box) is located at residues 359–427 (KKKNMSAYQV…KQNKAEATTV (69 aa)). Low complexity-rich tracts occupy residues 433 to 445 (SSES…GSSS) and 454 to 467 (SPTS…TSPA).

In terms of assembly, interacts with nlk.2.

It localises to the nucleus. In terms of biological role, negatively regulates Wnt/beta-catenin signaling during development. This Xenopus laevis (African clawed frog) protein is HMG box-containing protein 4 (hmgxb4).